A 185-amino-acid chain; its full sequence is Putative manganese efflux pump MntP (185 aa).

A run of 6 helical transmembrane segments spans residues 4-24, 36-56, 65-85, 105-125, 130-150, and 165-185; these read LTSS…ALAI, ALVI…AGWI, ISSY…IKMI, VILL…SFGV, VLMP…AGVF, and IFGG…ILPL.

This sequence belongs to the MntP (TC 9.B.29) family.

The protein localises to the cell membrane. Probably functions as a manganese efflux pump. The protein is Putative manganese efflux pump MntP of Methanoregula boonei (strain DSM 21154 / JCM 14090 / 6A8).